We begin with the raw amino-acid sequence, 488 residues long: Zinc finger protein 92 (488 aa).

One can recognise a KRAB domain in the interval 14-85 (VSFEDVSVYF…DDGMESAARS (72 aa)). 6 C2H2-type zinc fingers span residues 141–163 (YLCQ…RIIH), 169–191 (YECS…QRIH), 197–219 (YECG…QVIH), 225–247 (FVCR…TRIH), 253–275 (FECT…QRIH), and 281–303 (YICK…QLIH). The C2H2-type 7; degenerate zinc-finger motif lies at 309 to 331 (FTCHEYGKAFRGLSGLSQHQRVH). The segment at 337 to 359 (YECSECGRAFGRRANLFKHQVVH) adopts a C2H2-type 8 zinc-finger fold. A disordered region spans residues 387–408 (QQPQEAGEGSSAEPQPIDTNEK). The C2H2-type 9 zinc-finger motif lies at 410–432 (QVCERCGQVFENKLLLCRHLRIH). Residues 435–488 (EDDKKQKPVISSTSVLEDKSLLSQHLEAQPTEESDSEGSVVFVYAEKPHGPSSP) form a disordered region.

The protein belongs to the krueppel C2H2-type zinc-finger protein family. As to expression, highly expressed in pancreatic islets.

Its subcellular location is the nucleus. In terms of biological role, KRAB domain-containing zinc-finger protein that represses B1/Alu SINE transposable elements and modulates the transcription of nearby genes in a tissue-specific manner. It regulates glucose homeostasis and lipid metabolism by modulating the expression of the endocrine cell-defining transcription factor, MAFB, in pancreatic islets and, the fat metabolism regulator, ACACB, in adipose tissue and muscle. This chain is Zinc finger protein 92 (Zfp92), found in Mus musculus (Mouse).